A 217-amino-acid polypeptide reads, in one-letter code: Probable coenzyme A transferase subunit beta (217 aa).

Residue Glu-50 is part of the active site.

Belongs to the 3-oxoacid CoA-transferase subunit B family. In terms of assembly, heterodimer of a subunit alpha and a subunit beta.

In Bacillus subtilis (strain 168), this protein is Probable coenzyme A transferase subunit beta (yodR).